Reading from the N-terminus, the 361-residue chain is GDSL esterase/lipase At2g40250 (361 aa).

The signal sequence occupies residues 1-28; it reads MNRNQHKPMFVTFLINILLLQLLNLTNA. Ser-43 acts as the Nucleophile in catalysis. Catalysis depends on residues Asp-337 and His-340.

Belongs to the 'GDSL' lipolytic enzyme family.

Its subcellular location is the secreted. The protein is GDSL esterase/lipase At2g40250 of Arabidopsis thaliana (Mouse-ear cress).